Consider the following 215-residue polypeptide: 3-demethoxyubiquinol 3-hydroxylase (215 aa).

Residues Glu-64, Glu-94, His-97, Glu-146, Glu-178, and His-181 each coordinate Fe cation.

Belongs to the COQ7 family. The cofactor is Fe cation.

The protein localises to the cell membrane. The enzyme catalyses a 5-methoxy-2-methyl-3-(all-trans-polyprenyl)benzene-1,4-diol + AH2 + O2 = a 3-demethylubiquinol + A + H2O. It functions in the pathway cofactor biosynthesis; ubiquinone biosynthesis. In terms of biological role, catalyzes the hydroxylation of 2-nonaprenyl-3-methyl-6-methoxy-1,4-benzoquinol during ubiquinone biosynthesis. The chain is 3-demethoxyubiquinol 3-hydroxylase from Pseudomonas savastanoi pv. phaseolicola (strain 1448A / Race 6) (Pseudomonas syringae pv. phaseolicola (strain 1448A / Race 6)).